Reading from the N-terminus, the 187-residue chain is Avirulence protein ATR39-2 (187 aa).

Positions 1–20 (MVKCTPLLALTVIVSAGSDA) are cleaved as a signal peptide. The short motif at 49–66 (RVLRASDVPNEVAAGESR) is the RxLR-dEER element.

This sequence belongs to the RxLR effector family.

The protein localises to the secreted. It is found in the host cell. In terms of biological role, secreted effector that acts as an elicitor of hypersensitive response (HR) specifically on plants carrying defense protein RPP39. The allele ATR39-1 is recognized by RPP39, whereas the ATR39-2 allele is nor recognized. This is Avirulence protein ATR39-2 from Hyaloperonospora arabidopsidis (strain Emoy2) (Downy mildew agent).